The following is a 173-amino-acid chain: Transcription factor S-II-related protein (173 aa).

One can recognise a TFIIS central domain in the interval 9 to 129 (ISDKEREIVI…EETLNQMATV (121 aa)). The TFIIS-type zinc finger occupies 130 to 170 (EWKPCYACKNTSYHFYQLQTRSADEPMTTFYICKNCMKTYK). Residues C134, C137, C162, and C165 each contribute to the Zn(2+) site.

This sequence belongs to the TFS-II family.

The sequence is that of Transcription factor S-II-related protein from Acanthamoeba polyphaga mimivirus (APMV).